The following is a 444-amino-acid chain: Phosphoglucosamine mutase (444 aa).

The Phosphoserine intermediate role is filled by S102. 4 residues coordinate Mg(2+): S102, D241, D243, and D245. Residue S102 is modified to Phosphoserine.

It belongs to the phosphohexose mutase family. Requires Mg(2+) as cofactor. Activated by phosphorylation.

It catalyses the reaction alpha-D-glucosamine 1-phosphate = D-glucosamine 6-phosphate. Functionally, catalyzes the conversion of glucosamine-6-phosphate to glucosamine-1-phosphate. The polypeptide is Phosphoglucosamine mutase (Histophilus somni (strain 129Pt) (Haemophilus somnus)).